A 276-amino-acid chain; its full sequence is Large ribosomal subunit protein uL2c (276 aa).

Residues 225 to 276 (AMNPVDHPHGGGEGRTPIGRKKPVTPWGYSALGKKSRKRNRYSDASILRRRE) form a disordered region.

The protein belongs to the universal ribosomal protein uL2 family. As to quaternary structure, part of the 50S ribosomal subunit.

The protein resides in the plastid. Its subcellular location is the chloroplast. The protein is Large ribosomal subunit protein uL2c (rpl2) of Pinus thunbergii (Japanese black pine).